A 1193-amino-acid polypeptide reads, in one-letter code: MHGEVSGPAGTPGYSIAIVTLDAHAAGPAARIAPRLQQDFPGLTLSIHAAAEWAEKPEALAAAREAIGRADIVIANLLFIEEHINAVLPELQAARERVDAFVGMIADPSIVKLTKMGDLDMQKPASGPMALLKKLRGASKEQGNSGESQMRMLRTIPKMLKFVPGKAQDLRAWFLSMQYWLGGSDDNLEQMVRYLVSRYSANRAWHRIHAKAPIEYPEVGLYHPSLPDRITTDPNDLPRPAGAKVTVGLLMLRSYILASDTAHYDAVIEAFERKGIAVLPAFAGGLDGRPAIDAYFHDKLGTTIDAMVSLTGFSLVGGPAYNDSHAAIEALKGLDVPYIAAHPLEFQTLGQWAQAGGGLGPVETTMLVALPEIDGATNPTVFAGRHDLSGCTGCPGGCKATAQAAECRAMSPCHERIQTLAEKTLRLALLRRSKIAERRVGVVLYGFPPNAGAVGTAAYLAVFESLFNVLNAMKREGYQLEVPESVQALRDAVLGGTASQYGQPANIAAHVSAEKIVSGTPWLADIEKAWGAAPGRIQSDGRGVYILGQQFGNVFVGVQPVFGYEGDPMRLLFEKGFAPTHAFSVFYRWLREDFGADVLLHFGMHGALEFMPGKQAGMSGACWPDRLIGALPNVYLYAANNPSEASLAKRRSNAITVTHLTPPLAKAGLYRGLQDLKDSLTRYRQLAPDAPEREELSLLIGEQARAVNLDMVDVDTMWLKLLETEGSLITDGLHVVGRPMTEEQIADNIALMPEMSSERRAEVEGMLRQETEIAGLLRALGGHYMEPVPGGDLIRAPEILPTGRNIHAFDPFRMPTAYAIQDGAAQAQRLLDAHPKLPETVALVLWGSDNIKSDGGPIAQALALMGARPRFDHYGRLAGADLIPLSELGRPRIDVIMTLSGIFRDLLPLQTRMLAEAAWKAANAEGEPLAQNFIRAHALSYAQEMGVDMETASLRVFSNAEGAYGSNVNVLVGSSAFGEEDELADAYEARKSFAYGRSGKPVQNAALLQKSLKTVDVAYQNLESVELGVTTVDHYFDTLGGIARAVKRARGEEASVYIGDQTRGGGTVRTLKDQIALETRARSLNPKYYEGLLKHGAEGVRQIEAQVTNTLGWSATTQQVEPWVYQRLSETFVLDEAMRRRLAELNPEASVRMAERLLEASARNYWQPDAETLAALQGAADELEDRLEGIAAE.

Belongs to the Mg-chelatase subunit H family.

It catalyses the reaction protoporphyrin IX + Mg(2+) + ATP + H2O = Mg-protoporphyrin IX + ADP + phosphate + 3 H(+). It functions in the pathway porphyrin-containing compound metabolism; bacteriochlorophyll biosynthesis (light-independent). Functionally, involved in bacteriochlorophyll pigment biosynthesis; introduces a magnesium ion into protoporphyrin IX to yield Mg-protoroporphyrin IX. The sequence is that of Magnesium-chelatase subunit H (bchH) from Cereibacter sphaeroides (strain ATCC 17023 / DSM 158 / JCM 6121 / CCUG 31486 / LMG 2827 / NBRC 12203 / NCIMB 8253 / ATH 2.4.1.) (Rhodobacter sphaeroides).